A 333-amino-acid polypeptide reads, in one-letter code: Electron transfer flavoprotein subunit alpha, mitochondrial (333 aa).

A mitochondrion-targeting transit peptide spans 1–19 (MFRAAAPGQLRRAASLLRF). Residues 20–204 (QSTLVIAEHA…EISEWLDQKL (185 aa)) form a domain I region. K59 carries the post-translational modification N6-acetyllysine; alternate. The residue at position 59 (K59) is an N6-succinyllysine; alternate. K62 carries the N6-acetyllysine modification. K69 is modified (N6-acetyllysine; alternate). K69 bears the N6-succinyllysine; alternate mark. K75 carries the N6-acetyllysine modification. At K85 the chain carries N6-acetyllysine; alternate. The residue at position 85 (K85) is an N6-succinyllysine; alternate. T93 carries the post-translational modification Phosphothreonine. N6-acetyllysine occurs at positions 101 and 139. The residue at position 140 (S140) is a Phosphoserine. An N6-acetyllysine; alternate modification is found at K158. K158 carries the post-translational modification N6-succinyllysine; alternate. At K164 the chain carries N6-acetyllysine. The residue at position 187 (K187) is an N6-succinyllysine. K203 is modified (N6-acetyllysine; alternate). K203 carries the N6-succinyllysine; alternate modification. A domain II region spans residues 205–333 (TKSDRPELTG…PEMTEILKKK (129 aa)). K216 carries the N6-succinyllysine modification. FAD is bound at residue R223. K226 and K232 each carry N6-acetyllysine; alternate. Residues K226 and K232 each carry the N6-succinyllysine; alternate modification. FAD-binding positions include S248, 263-266 (VGQT), 281-286 (SGAIQH), and N300. An N6-succinyllysine modification is found at K301. Residue 318–319 (DL) coordinates FAD.

This sequence belongs to the ETF alpha-subunit/FixB family. In terms of assembly, heterodimer composed of ETFA and ETFB. Identified in a complex that contains ETFA, ETFB and ETFRF1. Interaction with ETFRF1 promotes dissociation of the bound FAD and loss of electron transfer activity. Interacts with TASOR. The cofactor is FAD. In terms of processing, the N-terminus is blocked.

It localises to the mitochondrion matrix. Heterodimeric electron transfer flavoprotein that accepts electrons from several mitochondrial dehydrogenases, including acyl-CoA dehydrogenases, glutaryl-CoA and sarcosine dehydrogenase. It transfers the electrons to the main mitochondrial respiratory chain via ETF-ubiquinone oxidoreductase (ETF dehydrogenase). Required for normal mitochondrial fatty acid oxidation and normal amino acid metabolism. This chain is Electron transfer flavoprotein subunit alpha, mitochondrial (ETFA), found in Homo sapiens (Human).